The chain runs to 554 residues: Sesquiterpene synthase 14b (554 aa).

Residues D305, D309, D449, and E457 each coordinate Mg(2+). A DDXXD motif motif is present at residues 305–309 (DDLYD).

It belongs to the terpene synthase family. Tpsa subfamily. Requires Mg(2+) as cofactor. It depends on Mn(2+) as a cofactor.

The enzyme catalyses (2E,6E)-farnesyl diphosphate = (E)-gamma-bisabolene + diphosphate. The catalysed reaction is (2Z,6Z)-farnesyl diphosphate = (E)-gamma-bisabolene + diphosphate. It carries out the reaction (2Z,6Z)-farnesyl diphosphate = (E)-alpha-bisabolene + diphosphate. It catalyses the reaction (2Z,6Z)-farnesyl diphosphate = (Z)-beta-farnesene + diphosphate. The enzyme catalyses (2E,6E)-farnesyl diphosphate = (E)-beta-farnesene + diphosphate. The catalysed reaction is (2E,6E)-farnesyl diphosphate = (+)-thujopsene + diphosphate. It carries out the reaction (2Z,6Z)-farnesyl diphosphate = (E)-beta-farnesene + diphosphate. It catalyses the reaction (2E,6E)-farnesyl diphosphate = (Z)-beta-farnesene + diphosphate. The enzyme catalyses (2Z,6Z)-farnesyl diphosphate = beta-acoradiene + diphosphate. The catalysed reaction is (2Z,6Z)-farnesyl diphosphate = alpha-acoradiene + diphosphate. It carries out the reaction (2Z,6Z)-farnesyl diphosphate = beta-bisabolene + diphosphate. It catalyses the reaction (2E,6E)-farnesyl diphosphate = (-)-alpha-cedrene + diphosphate. The enzyme catalyses (2E,6E)-farnesyl diphosphate = beta-bisabolene + diphosphate. The catalysed reaction is (2E,6E)-farnesyl diphosphate = beta-acoradiene + diphosphate. It carries out the reaction (2Z,6Z)-farnesyl diphosphate = (-)-alpha-cedrene + diphosphate. It catalyses the reaction (2E)-geranyl diphosphate = terpinolene + diphosphate. The enzyme catalyses (2E)-geranyl diphosphate = limonene + diphosphate. The catalysed reaction is (2E)-geranyl diphosphate = beta-myrcene + diphosphate. It functions in the pathway secondary metabolite biosynthesis; terpenoid biosynthesis. Functionally, sesquiterpene synthase involved in the biosynthesis of volatile compounds. Mediates the conversion of (2E,6E)-farnesyl diphosphate ((EE)-FPP) into (+)-thujopsene, beta-bisabolene, alpha-cederene, beta-acoradiene, (E)-gamma-bisabolene, (Z)-alpha-bisabolene, (Z)-beta-farnesene and (E)-beta-farnesene, and of (2Z,6Z)-farnesyl diphosphate ((ZZ)-FPP) into (E)-gamma-bisabolene, (E)-alpha-bisabolene, (E)-beta-farnesene, (Z)-beta-farnesene, beta-bisabolene, beta-acoradiene and alpha-acoradiene. Can act with a low efficiency as a monoterpene synthase with geranyl diphosphate (GPP) as substrate, thus producing beta-myrcene, limonene and terpinolene. The polypeptide is Sesquiterpene synthase 14b (Solanum habrochaites (Wild tomato)).